Here is a 310-residue protein sequence, read N- to C-terminus: 4-hydroxythreonine-4-phosphate dehydrogenase (310 aa).

Residue Thr129 coordinates substrate. A divalent metal cation is bound by residues His158, His202, and His250. Lys258, Asn267, and Arg276 together coordinate substrate.

This sequence belongs to the PdxA family. In terms of assembly, homodimer. A divalent metal cation is required as a cofactor.

The protein resides in the cytoplasm. The enzyme catalyses 4-(phosphooxy)-L-threonine + NAD(+) = 3-amino-2-oxopropyl phosphate + CO2 + NADH. It participates in cofactor biosynthesis; pyridoxine 5'-phosphate biosynthesis; pyridoxine 5'-phosphate from D-erythrose 4-phosphate: step 4/5. Catalyzes the NAD(P)-dependent oxidation of 4-(phosphooxy)-L-threonine (HTP) into 2-amino-3-oxo-4-(phosphooxy)butyric acid which spontaneously decarboxylates to form 3-amino-2-oxopropyl phosphate (AHAP). In Hydrogenobaculum sp. (strain Y04AAS1), this protein is 4-hydroxythreonine-4-phosphate dehydrogenase.